The following is a 62-amino-acid chain: Large ribosomal subunit protein bL33 (62 aa).

Belongs to the bacterial ribosomal protein bL33 family.

This Bacteroides thetaiotaomicron (strain ATCC 29148 / DSM 2079 / JCM 5827 / CCUG 10774 / NCTC 10582 / VPI-5482 / E50) protein is Large ribosomal subunit protein bL33.